A 531-amino-acid chain; its full sequence is ATP synthase subunit beta (531 aa).

Residues Met-1–Lys-48 form a disordered region. Residues Ser-19–Val-29 are compositionally biased toward basic residues. The span at Ser-30–His-44 shows a compositional bias: polar residues. Gly-203–Thr-210 serves as a coordination point for ATP.

It belongs to the ATPase alpha/beta chains family. As to quaternary structure, F-type ATPases have 2 components, CF(1) - the catalytic core - and CF(0) - the membrane proton channel. CF(1) has five subunits: alpha(3), beta(3), gamma(1), delta(1), epsilon(1). CF(0) has three main subunits: a(1), b(2) and c(9-12). The alpha and beta chains form an alternating ring which encloses part of the gamma chain. CF(1) is attached to CF(0) by a central stalk formed by the gamma and epsilon chains, while a peripheral stalk is formed by the delta and b chains.

Its subcellular location is the cell inner membrane. The catalysed reaction is ATP + H2O + 4 H(+)(in) = ADP + phosphate + 5 H(+)(out). Produces ATP from ADP in the presence of a proton gradient across the membrane. The catalytic sites are hosted primarily by the beta subunits. This Bartonella henselae (strain ATCC 49882 / DSM 28221 / CCUG 30454 / Houston 1) (Rochalimaea henselae) protein is ATP synthase subunit beta.